The sequence spans 45 residues: Cytochrome b559 subunit beta (45 aa).

The chain crosses the membrane as a helical span at residues W20–A36. H24 serves as a coordination point for heme.

It belongs to the PsbE/PsbF family. As to quaternary structure, heterodimer of an alpha subunit and a beta subunit. PSII is composed of 1 copy each of membrane proteins PsbA, PsbB, PsbC, PsbD, PsbE, PsbF, PsbH, PsbI, PsbJ, PsbK, PsbL, PsbM, PsbT, PsbX, PsbY, PsbZ, Psb30/Ycf12, peripheral proteins PsbO, CyanoQ (PsbQ), PsbU, PsbV and a large number of cofactors. It forms dimeric complexes. The cofactor is heme b.

Its subcellular location is the cellular thylakoid membrane. This b-type cytochrome is tightly associated with the reaction center of photosystem II (PSII). PSII is a light-driven water:plastoquinone oxidoreductase that uses light energy to abstract electrons from H(2)O, generating O(2) and a proton gradient subsequently used for ATP formation. It consists of a core antenna complex that captures photons, and an electron transfer chain that converts photonic excitation into a charge separation. This Nostoc sp. (strain PCC 7120 / SAG 25.82 / UTEX 2576) protein is Cytochrome b559 subunit beta.